Consider the following 156-residue polypeptide: Ribosome maturation factor RimP (156 aa).

This sequence belongs to the RimP family.

The protein localises to the cytoplasm. Functionally, required for maturation of 30S ribosomal subunits. This chain is Ribosome maturation factor RimP, found in Exiguobacterium sp. (strain ATCC BAA-1283 / AT1b).